A 275-amino-acid chain; its full sequence is Formamidopyrimidine-DNA glycosylase (275 aa).

Catalysis depends on P2, which acts as the Schiff-base intermediate with DNA. The active-site Proton donor is the E3. The active-site Proton donor; for beta-elimination activity is K58. Positions 93, 111, and 156 each coordinate DNA. Residues 241–275 (FVYDRAGQPCRVCGTPVRQIVQGQRSTYFCPTCQR) form an FPG-type zinc finger. Residue R265 is the Proton donor; for delta-elimination activity of the active site.

Belongs to the FPG family. As to quaternary structure, monomer. It depends on Zn(2+) as a cofactor.

The enzyme catalyses Hydrolysis of DNA containing ring-opened 7-methylguanine residues, releasing 2,6-diamino-4-hydroxy-5-(N-methyl)formamidopyrimidine.. It carries out the reaction 2'-deoxyribonucleotide-(2'-deoxyribose 5'-phosphate)-2'-deoxyribonucleotide-DNA = a 3'-end 2'-deoxyribonucleotide-(2,3-dehydro-2,3-deoxyribose 5'-phosphate)-DNA + a 5'-end 5'-phospho-2'-deoxyribonucleoside-DNA + H(+). Its function is as follows. Involved in base excision repair of DNA damaged by oxidation or by mutagenic agents. Acts as a DNA glycosylase that recognizes and removes damaged bases. Has a preference for oxidized purines, such as 7,8-dihydro-8-oxoguanine (8-oxoG). Has AP (apurinic/apyrimidinic) lyase activity and introduces nicks in the DNA strand. Cleaves the DNA backbone by beta-delta elimination to generate a single-strand break at the site of the removed base with both 3'- and 5'-phosphates. The chain is Formamidopyrimidine-DNA glycosylase from Burkholderia cenocepacia (strain HI2424).